Reading from the N-terminus, the 320-residue chain is tRNA dimethylallyltransferase (320 aa).

Residue 14–21 coordinates ATP; sequence GPTASGKT. 16–21 is a substrate binding site; that stretch reads TASGKT. Interaction with substrate tRNA stretches follow at residues 39-42 and 163-167; these read DSAL and QRLQR.

It belongs to the IPP transferase family. Monomer. It depends on Mg(2+) as a cofactor.

The catalysed reaction is adenosine(37) in tRNA + dimethylallyl diphosphate = N(6)-dimethylallyladenosine(37) in tRNA + diphosphate. Its function is as follows. Catalyzes the transfer of a dimethylallyl group onto the adenine at position 37 in tRNAs that read codons beginning with uridine, leading to the formation of N6-(dimethylallyl)adenosine (i(6)A). The polypeptide is tRNA dimethylallyltransferase (Thioalkalivibrio sulfidiphilus (strain HL-EbGR7)).